The sequence spans 406 residues: Arginine deiminase (406 aa).

Cys396 functions as the Amidino-cysteine intermediate in the catalytic mechanism.

The protein belongs to the arginine deiminase family.

The protein resides in the cytoplasm. It catalyses the reaction L-arginine + H2O = L-citrulline + NH4(+). It participates in amino-acid degradation; L-arginine degradation via ADI pathway; carbamoyl phosphate from L-arginine: step 1/2. This is Arginine deiminase from Salmonella typhimurium (strain LT2 / SGSC1412 / ATCC 700720).